A 302-amino-acid chain; its full sequence is DDRGK domain-containing protein 1 (302 aa).

A helical membrane pass occupies residues 1–21 (MDPLLLGSVGVLVLAVTLIIW). The Cytoplasmic portion of the chain corresponds to 22–302 (RLLKLQWDEK…IRLETPSAAE (281 aa)). Residues 101–178 (EYDEDGKKIG…EREEKERKEH (78 aa)) are disordered. Residues 118–178 (QAKEEKRQMR…EREEKERKEH (61 aa)) are compositionally biased toward basic and acidic residues.

This sequence belongs to the DDRGK1 family.

Its subcellular location is the endoplasmic reticulum membrane. Substrate adapter for ufmylation, the covalent attachment of the ubiquitin-like modifier ufm-1 to substrate proteins. This is DDRGK domain-containing protein 1 from Caenorhabditis elegans.